The primary structure comprises 439 residues: MATVLIVGKPNVGKSTLFNKLVRKKKAIVEDEEGVTRDPVQDTVEWYGKTFKLVDTCGVFDNPQDIISQKMKEVTLNMIREADLVLFVVDGKKGITKEDESLADFLRKSNVDTILVANKTENLREFEREVKPELYGLGFGEPIPVSAEHNVNLDVLVETIIRKLEEKGLDLESKPEITDAIKVAIVGRPNVGKSTLFNAILNKERALVSPIPGTTRDPVDEEVFIDGRKYVFVDTAGLRRKSRVEPRTVEKYSNYRVVDSIEKADVVVIVLDATQGITRQDQRIAGLVERRGRASVVVFNKWDLVEHREKRYDEFTKLFREKFYFVDYSPLIFISADKGWNIDKVIDAINLAYASYTTKVPSSAINSALQKVLAFTNLPRGLKIFFGLQVDIKPPTFLFFVNSIEKIKNPQKVFLRKLIRDYVFPFEGSPIFLKFKRSR.

EngA-type G domains are found at residues 2–168 (ATVL…EEKG) and 181–357 (IKVA…ASYT). Residues 8-15 (GKPNVGKS), 55-59 (DTCGV), 118-121 (NKTE), 187-194 (GRPNVGKS), 234-238 (DTAGL), and 300-303 (NKWD) each bind GTP. The KH-like domain maps to 358-439 (TKVPSSAINS…PIFLKFKRSR (82 aa)).

It belongs to the TRAFAC class TrmE-Era-EngA-EngB-Septin-like GTPase superfamily. EngA (Der) GTPase family. As to quaternary structure, associates with the 50S ribosomal subunit.

Its function is as follows. GTPase that plays an essential role in the late steps of ribosome biogenesis. The chain is GTPase Der from Thermotoga petrophila (strain ATCC BAA-488 / DSM 13995 / JCM 10881 / RKU-1).